Consider the following 261-residue polypeptide: Cytochrome c oxidase subunit 3 (261 aa).

The Mitochondrial matrix portion of the chain corresponds to 1 to 15; that stretch reads MTHQTHAYHMVNPSP. The chain crosses the membrane as a helical span at residues 16 to 34; that stretch reads WPLTGALSALLLTSGLIMW. Residues 35–40 are Mitochondrial intermembrane-facing; the sequence is FHFNSF. The chain crosses the membrane as a helical span at residues 41–66; sequence LLVIIGLTCMLLTMYQWWRDIVREGT. Over 67–72 the chain is Mitochondrial matrix; that stretch reads FQGHHT. A helical membrane pass occupies residues 73–105; that stretch reads PVVQKGLRYGMVLFIVSEVFFFLGFFWAFYHSS. The Mitochondrial intermembrane portion of the chain corresponds to 106 to 128; the sequence is LAPTPELGGCWPPTGIHPLNPLE. The chain crosses the membrane as a helical span at residues 129 to 152; it reads VPLLNTSILLASGVSITWAHHSLM. Over 153-155 the chain is Mitochondrial matrix; the sequence is EGN. A helical transmembrane segment spans residues 156-183; that stretch reads RKQMIQALSITILLGIYFTILQASEYYE. The Mitochondrial intermembrane portion of the chain corresponds to 184–190; that stretch reads SSFTISD. The helical transmembrane segment at 191 to 223 threads the bilayer; the sequence is GVYGSTFFVATGFHGLHVIIGTTFLIVCLLRQF. The Mitochondrial matrix segment spans residues 224 to 232; sequence NFHFTSTHH. Residues 233–256 traverse the membrane as a helical segment; that stretch reads FGFEAAAWYWHFVDVVWLFLYVSI. Over 257–261 the chain is Mitochondrial intermembrane; that stretch reads YWWGS.

This sequence belongs to the cytochrome c oxidase subunit 3 family. As to quaternary structure, component of the cytochrome c oxidase (complex IV, CIV), a multisubunit enzyme composed of 14 subunits. The complex is composed of a catalytic core of 3 subunits MT-CO1, MT-CO2 and MT-CO3, encoded in the mitochondrial DNA, and 11 supernumerary subunits COX4I, COX5A, COX5B, COX6A, COX6B, COX6C, COX7A, COX7B, COX7C, COX8 and NDUFA4, which are encoded in the nuclear genome. The complex exists as a monomer or a dimer and forms supercomplexes (SCs) in the inner mitochondrial membrane with NADH-ubiquinone oxidoreductase (complex I, CI) and ubiquinol-cytochrome c oxidoreductase (cytochrome b-c1 complex, complex III, CIII), resulting in different assemblies (supercomplex SCI(1)III(2)IV(1) and megacomplex MCI(2)III(2)IV(2)).

The protein resides in the mitochondrion inner membrane. The enzyme catalyses 4 Fe(II)-[cytochrome c] + O2 + 8 H(+)(in) = 4 Fe(III)-[cytochrome c] + 2 H2O + 4 H(+)(out). In terms of biological role, component of the cytochrome c oxidase, the last enzyme in the mitochondrial electron transport chain which drives oxidative phosphorylation. The respiratory chain contains 3 multisubunit complexes succinate dehydrogenase (complex II, CII), ubiquinol-cytochrome c oxidoreductase (cytochrome b-c1 complex, complex III, CIII) and cytochrome c oxidase (complex IV, CIV), that cooperate to transfer electrons derived from NADH and succinate to molecular oxygen, creating an electrochemical gradient over the inner membrane that drives transmembrane transport and the ATP synthase. Cytochrome c oxidase is the component of the respiratory chain that catalyzes the reduction of oxygen to water. Electrons originating from reduced cytochrome c in the intermembrane space (IMS) are transferred via the dinuclear copper A center (CU(A)) of subunit 2 and heme A of subunit 1 to the active site in subunit 1, a binuclear center (BNC) formed by heme A3 and copper B (CU(B)). The BNC reduces molecular oxygen to 2 water molecules using 4 electrons from cytochrome c in the IMS and 4 protons from the mitochondrial matrix. The chain is Cytochrome c oxidase subunit 3 (MT-CO3) from Osphranter robustus (Wallaroo).